The sequence spans 1268 residues: Protein transport protein Sec24B (1268 aa).

Low complexity-rich tracts occupy residues 1–14 (MSAP…AASA) and 21–48 (GGAA…GPAQ). 4 disordered regions span residues 1–71 (MSAP…SGHY), 216–263 (APTV…LTWS), 303–345 (QNVQ…SVTQ), and 362–451 (NNQA…VVPQ). Ser2 carries the N-acetylserine modification. Residue Ser55 is modified to Phosphoserine. Residues 225–234 (NSFSGQNTAI) show a composition bias toward polar residues. Composition is skewed to low complexity over residues 245 to 255 (SQQHHQQQSLS), 311 to 332 (SPVV…TPPT), and 365 to 375 (ASSAPTPLSST). Residue Thr329 is modified to Phosphothreonine. Residues 376-389 (SDDEEEEEEDEEAG) show a composition bias toward acidic residues. The span at 426 to 450 (APDPAPEPDPASAPAPASAPAPVVP) shows a compositional bias: pro residues. Positions 605, 608, 626, and 629 each coordinate Zn(2+). Residues 605–629 (CRSCRTYINPFVSFIDQRRWKCNLC) are zinc finger-like. The Gelsolin-like repeat unit spans residues 1141-1213 (PQPPLQKLSA…TLSSERARSF (73 aa)). Ser1224 carries the post-translational modification Phosphoserine.

This sequence belongs to the SEC23/SEC24 family. SEC24 subfamily. In terms of assembly, COPII is composed of at least five proteins: the Sec23/24 complex, the Sec13/31 complex and SAR1. Interacts with STING1; promoting STING1 translocation to COPII vesicles in a STEEP1-dependent manner. Interacts with RNF139. Interacts with TMED2 and TMED10. Interacts with CNIH4.

It localises to the cytoplasmic vesicle. The protein resides in the COPII-coated vesicle membrane. Its subcellular location is the endoplasmic reticulum membrane. The protein localises to the cytoplasm. It is found in the cytosol. In terms of biological role, component of the coat protein complex II (COPII) which promotes the formation of transport vesicles from the endoplasmic reticulum (ER). The coat has two main functions, the physical deformation of the endoplasmic reticulum membrane into vesicles and the selection of cargo molecules for their transport to the Golgi complex. Plays a central role in cargo selection within the COPII complex and together with SEC24A may have a different specificity compared to SEC24C and SEC24D. May package preferentially cargos with cytoplasmic DxE or LxxLE motifs and may also recognize conformational epitopes. This is Protein transport protein Sec24B from Homo sapiens (Human).